A 192-amino-acid chain; its full sequence is MVRAGAVGAHLPASGLDIFGDLKKMNKRQLYYQVLNFAMIVSSALMIWKGLIVLTGSESPIVVVLSGSMEPAFHRGDLLFLTNFREDPIRAGEIVVFKVEGRDIPIVHRVIKVHEKDNGDIKFLTKGDNNEVDDRGLYKEGQNWLEKKDVVGRARGFLPYVGMVTIIMNDYPKFKYALLAVMGAYVLLKRES.

Over 1-28 (MVRAGAVGAHLPASGLDIFGDLKKMNKR) the chain is Cytoplasmic. Residues 29-48 (QLYYQVLNFAMIVSSALMIW) form a helical; Signal-anchor for type II membrane protein membrane-spanning segment. Over 49–192 (KGLIVLTGSE…GAYVLLKRES (144 aa)) the chain is Lumenal. Active-site charge relay system residues include Ser68, His108, and Asp134. The interval 177-188 (ALLAVMGAYVLL) is C-terminal short (CTS) helix.

It belongs to the peptidase S26B family. As to quaternary structure, component of the signal peptidase complex paralog C (SPC-C) composed of a catalytic subunit SEC11C and three accessory subunits SPCS1, SPCS2 and SPCS3. Within the complex, interacts with SPCS2 and SPCS3. The complex induces a local thinning of the ER membrane which is used to measure the length of the signal peptide (SP) h-region of protein substrates. This ensures the selectivity of the complex towards h-regions shorter than 18-20 amino acids. Post-translationally, may undergo processing at the N-terminus.

Its subcellular location is the endoplasmic reticulum membrane. The enzyme catalyses Cleavage of hydrophobic, N-terminal signal or leader sequences from secreted and periplasmic proteins.. Its function is as follows. Catalytic component of the signal peptidase complex (SPC) which catalyzes the cleavage of N-terminal signal sequences from nascent proteins as they are translocated into the lumen of the endoplasmic reticulum. Specifically cleaves N-terminal signal peptides that contain a hydrophobic alpha-helix (h-region) shorter than 18-20 amino acids. The protein is Signal peptidase complex catalytic subunit SEC11C (SEC11C) of Homo sapiens (Human).